Consider the following 405-residue polypeptide: Nicotinate phosphoribosyltransferase (405 aa).

Residue histidine 230 is modified to Phosphohistidine; by autocatalysis.

This sequence belongs to the NAPRTase family. Transiently phosphorylated on a His residue during the reaction cycle. Phosphorylation strongly increases the affinity for substrates and increases the rate of nicotinate D-ribonucleotide production. Dephosphorylation regenerates the low-affinity form of the enzyme, leading to product release.

The catalysed reaction is nicotinate + 5-phospho-alpha-D-ribose 1-diphosphate + ATP + H2O = nicotinate beta-D-ribonucleotide + ADP + phosphate + diphosphate. It participates in cofactor biosynthesis; NAD(+) biosynthesis; nicotinate D-ribonucleotide from nicotinate: step 1/1. In terms of biological role, catalyzes the synthesis of beta-nicotinate D-ribonucleotide from nicotinate and 5-phospho-D-ribose 1-phosphate at the expense of ATP. The chain is Nicotinate phosphoribosyltransferase from Bordetella bronchiseptica (strain ATCC BAA-588 / NCTC 13252 / RB50) (Alcaligenes bronchisepticus).